A 332-amino-acid polypeptide reads, in one-letter code: Small ribosomal subunit protein uS2 (332 aa).

It belongs to the universal ribosomal protein uS2 family.

This chain is Small ribosomal subunit protein uS2, found in Afipia carboxidovorans (strain ATCC 49405 / DSM 1227 / KCTC 32145 / OM5) (Oligotropha carboxidovorans).